The following is a 109-amino-acid chain: Oncomodulin-1 (109 aa).

Residue Ser-2 is modified to N-acetylserine. EF-hand domains lie at 39–74 and 78–109; these read MSANQVKDVFRFIDNDQSGYLDEEELKFFLQKFESG and LTESETKSLMAAADNDGDGKIGAEEFQEMVHS. Residues Asp-52, Asp-54, Ser-56, Tyr-58, Glu-63, Asp-91, Asp-93, Asp-95, Lys-97, and Glu-102 each contribute to the Ca(2+) site.

It belongs to the parvalbumin family.

Functionally, has some calmodulin-like activity with respect to enzyme activation and growth regulation. Binds two calcium ions. The chain is Oncomodulin-1 (OCM) from Homo sapiens (Human).